The following is a 310-amino-acid chain: Malate dehydrogenase (310 aa).

NAD(+) is bound by residues 7–12 and aspartate 32; that span reads GAGNVG. Substrate-binding residues include arginine 81 and arginine 87. NAD(+) is bound by residues asparagine 94 and 117–119; that span reads VSN. Substrate contacts are provided by asparagine 119 and arginine 150. Histidine 174 serves as the catalytic Proton acceptor.

The protein belongs to the LDH/MDH superfamily. MDH type 3 family.

It carries out the reaction (S)-malate + NAD(+) = oxaloacetate + NADH + H(+). Catalyzes the reversible oxidation of malate to oxaloacetate. The sequence is that of Malate dehydrogenase from Chlorobium phaeobacteroides (strain DSM 266 / SMG 266 / 2430).